The primary structure comprises 243 residues: Methylthioribulose-1-phosphate dehydratase (243 aa).

The interval 1–22 (MCPADQTVATNNNDHLVQSEDP) is disordered. Residues 7-16 (TVATNNNDHL) show a composition bias toward polar residues. A substrate-binding site is contributed by cysteine 103. 2 residues coordinate Zn(2+): histidine 120 and histidine 122. Glutamate 149 serves as the catalytic Proton donor/acceptor. Zn(2+) is bound at residue histidine 205.

Belongs to the aldolase class II family. MtnB subfamily. Requires Zn(2+) as cofactor.

It localises to the cytoplasm. It carries out the reaction 5-(methylsulfanyl)-D-ribulose 1-phosphate = 5-methylsulfanyl-2,3-dioxopentyl phosphate + H2O. It functions in the pathway amino-acid biosynthesis; L-methionine biosynthesis via salvage pathway; L-methionine from S-methyl-5-thio-alpha-D-ribose 1-phosphate: step 2/6. Catalyzes the dehydration of methylthioribulose-1-phosphate (MTRu-1-P) into 2,3-diketo-5-methylthiopentyl-1-phosphate (DK-MTP-1-P). This is Methylthioribulose-1-phosphate dehydratase from Penicillium rubens (strain ATCC 28089 / DSM 1075 / NRRL 1951 / Wisconsin 54-1255) (Penicillium chrysogenum).